We begin with the raw amino-acid sequence, 352 residues long: Biotin synthase (352 aa).

In terms of domain architecture, Radical SAM core spans 44 to 262; sequence NRVQVSTLLS…LAVARLLMPK (219 aa). [4Fe-4S] cluster contacts are provided by cysteine 59, cysteine 63, and cysteine 66. Residues cysteine 103, cysteine 134, cysteine 194, and arginine 266 each contribute to the [2Fe-2S] cluster site.

Belongs to the radical SAM superfamily. Biotin synthase family. As to quaternary structure, homodimer. Requires [4Fe-4S] cluster as cofactor. The cofactor is [2Fe-2S] cluster.

The enzyme catalyses (4R,5S)-dethiobiotin + (sulfur carrier)-SH + 2 reduced [2Fe-2S]-[ferredoxin] + 2 S-adenosyl-L-methionine = (sulfur carrier)-H + biotin + 2 5'-deoxyadenosine + 2 L-methionine + 2 oxidized [2Fe-2S]-[ferredoxin]. It functions in the pathway cofactor biosynthesis; biotin biosynthesis; biotin from 7,8-diaminononanoate: step 2/2. Its function is as follows. Catalyzes the conversion of dethiobiotin (DTB) to biotin by the insertion of a sulfur atom into dethiobiotin via a radical-based mechanism. In Pseudomonas putida (strain W619), this protein is Biotin synthase.